We begin with the raw amino-acid sequence, 200 residues long: Superoxide dismutase [Fe] (200 aa).

Residues His-28, His-82, Asp-165, and His-169 each contribute to the Fe cation site.

It belongs to the iron/manganese superoxide dismutase family. As to quaternary structure, homodimer. Fe cation serves as cofactor.

It catalyses the reaction 2 superoxide + 2 H(+) = H2O2 + O2. In terms of biological role, destroys superoxide anion radicals which are normally produced within the cells and which are toxic to biological systems. The chain is Superoxide dismutase [Fe] (sodB) from Rhodobacter capsulatus (Rhodopseudomonas capsulata).